We begin with the raw amino-acid sequence, 156 residues long: Transcription elongation factor GreA (156 aa).

Positions 8–75 (LTKEGYEKLK…ELENMLSKAE (68 aa)) form a coiled coil.

The protein belongs to the GreA/GreB family.

Functionally, necessary for efficient RNA polymerase transcription elongation past template-encoded arresting sites. The arresting sites in DNA have the property of trapping a certain fraction of elongating RNA polymerases that pass through, resulting in locked ternary complexes. Cleavage of the nascent transcript by cleavage factors such as GreA or GreB allows the resumption of elongation from the new 3'terminus. GreA releases sequences of 2 to 3 nucleotides. The polypeptide is Transcription elongation factor GreA (Thermosipho melanesiensis (strain DSM 12029 / CIP 104789 / BI429)).